Reading from the N-terminus, the 183-residue chain is Photosystem I assembly protein Ycf3 (183 aa).

TPR repeat units lie at residues 35 to 68 (AFIYYRDGMSAQSEGEYAEALGSYYKAMRLEIDS), 72 to 105 (SYILYNIGLIHTSNGNHAKALEYYFQALERNSFL), and 120 to 153 (GEQAIYQGDLEISEAWFDQAAEYWRRAIALSPDN).

Belongs to the Ycf3 family.

It is found in the plastid. It localises to the chloroplast thylakoid membrane. In terms of biological role, essential for the assembly of the photosystem I (PSI) complex. May act as a chaperone-like factor to guide the assembly of the PSI subunits. This Adiantum capillus-veneris (Maidenhair fern) protein is Photosystem I assembly protein Ycf3.